Consider the following 1072-residue polypeptide: MERERSNFFFLFLFCSWVSMAQPTLSLSSDGQALLSLKRPSPSLFSSWDPQDQTPCSWYGITCSADNRVISVSIPDTFLNLSSIPDLSSLSSLQFLNLSSTNLSGPIPPSFGKLTHLRLLDLSSNSLSGPIPSELGRLSTLQFLILNANKLSGSIPSQISNLFALQVLCLQDNLLNGSIPSSFGSLVSLQQFRLGGNTNLGGPIPAQLGFLKNLTTLGFAASGLSGSIPSTFGNLVNLQTLALYDTEISGTIPPQLGLCSELRNLYLHMNKLTGSIPKELGKLQKITSLLLWGNSLSGVIPPEISNCSSLVVFDVSANDLTGDIPGDLGKLVWLEQLQLSDNMFTGQIPWELSNCSSLIALQLDKNKLSGSIPSQIGNLKSLQSFFLWENSISGTIPSSFGNCTDLVALDLSRNKLTGRIPEELFSLKRLSKLLLLGNSLSGGLPKSVAKCQSLVRLRVGENQLSGQIPKEIGELQNLVFLDLYMNHFSGGLPYEISNITVLELLDVHNNYITGDIPAQLGNLVNLEQLDLSRNSFTGNIPLSFGNLSYLNKLILNNNLLTGQIPKSIKNLQKLTLLDLSYNSLSGEIPQELGQVTSLTINLDLSYNTFTGNIPETFSDLTQLQSLDLSSNSLHGDIKVLGSLTSLASLNISCNNFSGPIPSTPFFKTISTTSYLQNTNLCHSLDGITCSSHTGQNNGVKSPKIVALTAVILASITIAILAAWLLILRNNHLYKTSQNSSSSPSTAEDFSYPWTFIPFQKLGITVNNIVTSLTDENVIGKGCSGIVYKAEIPNGDIVAVKKLWKTKDNNEEGESTIDSFAAEIQILGNIRHRNIVKLLGYCSNKSVKLLLYNYFPNGNLQQLLQGNRNLDWETRYKIAIGAAQGLAYLHHDCVPAILHRDVKCNNILLDSKYEAILADFGLAKLMMNSPNYHNAMSRVAGSYGYIAPEYGYTMNITEKSDVYSYGVVLLEILSGRSAVEPQIGDGLHIVEWVKKKMGTFEPALSVLDVKLQGLPDQIVQEMLQTLGIAMFCVNPSPVERPTMKEVVTLLMEVKCSPEEWGKTSQPLIKPSSS.

A signal peptide spans methionine 1–alanine 21. At glutamine 22 to alanine 706 the chain is on the extracellular side. An intrachain disulfide couples cysteine 56 to cysteine 63. LRR repeat units follow at residues aspartate 66 to serine 89, leucine 90 to lysine 113, leucine 114 to leucine 138, threonine 140 to leucine 162, alanine 164 to serine 185, valine 187 to leucine 211, lysine 212 to asparagine 234, leucine 235 to cysteine 259, serine 260 to leucine 283, lysine 285 to cysteine 307, serine 308 to leucine 331, valine 332 to cysteine 355, serine 356 to leucine 379, serine 381 to asparagine 402, cysteine 403 to leucine 427, arginine 429 to cysteine 451, glutamine 452 to leucine 475, asparagine 477 to isoleucine 499, threonine 500 to leucine 523, valine 524 to asparagine 546, serine 548 to leucine 571, glutamine 572 to valine 595, serine 597 to aspartate 619, leucine 620 to serine 642, and leucine 643 to lysine 667. Asparagine 80, asparagine 97, and asparagine 102 each carry an N-linked (GlcNAc...) asparagine glycan. The Small peptide recognition motif lies at glutamine 171 to aspartate 172. Asparagine 176 carries an N-linked (GlcNAc...) asparagine glycan. A Small peptide recognition motif is present at residues arginine 193–glycine 196. Asparagine 213 carries N-linked (GlcNAc...) asparagine glycosylation. Short sequence motifs (small peptide recognition) lie at residues threonine 216–alanine 221, tyrosine 244, and tyrosine 266–histidine 268. Residue asparagine 306 is glycosylated (N-linked (GlcNAc...) asparagine). 2 short sequence motifs (small peptide recognition) span residues aspartate 314–alanine 317 and glutamine 336–glutamine 338. A glycan (N-linked (GlcNAc...) asparagine) is linked at asparagine 354. A Small peptide recognition motif is present at residues serine 384 to tryptophan 388. A glycan (N-linked (GlcNAc...) asparagine) is linked at asparagine 402. Short sequence motifs (small peptide recognition) lie at residues aspartate 410–arginine 413, lysine 432–leucine 436, and arginine 456–arginine 458. N-linked (GlcNAc...) asparagine glycosylation is present at asparagine 498. Asparagine 546 carries an N-linked (GlcNAc...) asparagine glycan. 2 N-linked (GlcNAc...) asparagine glycosylation sites follow: asparagine 650 and asparagine 655. The chain crosses the membrane as a helical span at residues leucine 707–leucine 727. Over arginine 728–serine 1072 the chain is Cytoplasmic. Threonine 764 carries the phosphothreonine modification. A Protein kinase domain is found at leucine 772–isoleucine 1067. Residues isoleucine 778–valine 786 and lysine 800 each bind ATP. Phosphotyrosine is present on residues tyrosine 851 and tyrosine 887. The active-site Proton acceptor is the aspartate 900. Serine 936 carries the post-translational modification Phosphoserine. Tyrosine 944 and tyrosine 951 each carry phosphotyrosine. Threonine 952 bears the Phosphothreonine mark.

The protein belongs to the protein kinase superfamily. Ser/Thr protein kinase family. In terms of assembly, binds to RGF1; this interaction triggers the formation of heterodimers with SERK1. Phosphorylated and ubiquitinated upon interaction with RGF1, thus leading to activation a subsequent degradation. Post-translationally, autophosphorylated. As to expression, expressed in roots and hypocotyls.

The protein resides in the membrane. The catalysed reaction is L-seryl-[protein] + ATP = O-phospho-L-seryl-[protein] + ADP + H(+). It carries out the reaction L-threonyl-[protein] + ATP = O-phospho-L-threonyl-[protein] + ADP + H(+). Functionally, together with RGI1, RGI2, RGI3 and RGI4, acts as a receptor of RGF1, a peptide hormone that maintains the postembryonic root stem cell niche by regulating the expression levels and patterns of the transcription factor PLETHORA (PLT). Links RGF1 signal with its downstream components. In Arabidopsis thaliana (Mouse-ear cress), this protein is LRR receptor-like serine/threonine-protein kinase RGI5.